Here is a 144-residue protein sequence, read N- to C-terminus: HMG1/2-like protein (144 aa).

Disordered stretches follow at residues 1–42 (MKGG…PPSA) and 85–144 (PFIS…EDDD). 2 stretches are compositionally biased toward basic and acidic residues: residues 8–35 (AKSDNKLAVKKQAADTKKTKKAVKDPNK) and 89–99 (KAEKRKQEYEK). Positions 36 to 105 (PKRPPSAFFV…EYEKNLQAYN (70 aa)) form a DNA-binding region, HMG box. Over residues 126–144 (NDDDEDQDGSGEDDSEDDD) the composition is skewed to acidic residues.

This sequence belongs to the HMGB family. Expressed at higher levels in dark-grown tissues, such as roots; and at lower levels in light-grown tissues, such as cotyledons and stems.

The protein localises to the nucleus. This is HMG1/2-like protein from Ipomoea nil (Japanese morning glory).